Reading from the N-terminus, the 175-residue chain is ATP-dependent protease subunit HslV (175 aa).

Residue Thr2 is part of the active site. The Na(+) site is built by Ala156, Cys159, and Thr162.

Belongs to the peptidase T1B family. HslV subfamily. As to quaternary structure, a double ring-shaped homohexamer of HslV is capped on each side by a ring-shaped HslU homohexamer. The assembly of the HslU/HslV complex is dependent on binding of ATP.

It is found in the cytoplasm. The enzyme catalyses ATP-dependent cleavage of peptide bonds with broad specificity.. Allosterically activated by HslU binding. Its function is as follows. Protease subunit of a proteasome-like degradation complex believed to be a general protein degrading machinery. This is ATP-dependent protease subunit HslV from Rhizobium etli (strain ATCC 51251 / DSM 11541 / JCM 21823 / NBRC 15573 / CFN 42).